The chain runs to 82 residues: MPHIIVKIAEGRSQPLKQELADRLAATMMDVLGLDSSAVSVAVEDVPMQDWMQQVYGPDIETAGERLLKRPGYGQLASPPEE.

Catalysis depends on proline 2, which acts as the Proton acceptor; via imino nitrogen.

The protein belongs to the 4-oxalocrotonate tautomerase family.

The polypeptide is Probable tautomerase XF_1725 (Xylella fastidiosa (strain 9a5c)).